The primary structure comprises 89 residues: Large ribosomal subunit protein bL27 (89 aa).

The interval 1–21 is disordered; sequence MAHKKAGGSSRNGRDSQSKRL.

The protein belongs to the bacterial ribosomal protein bL27 family.

This chain is Large ribosomal subunit protein bL27, found in Rhizobium rhizogenes (strain K84 / ATCC BAA-868) (Agrobacterium radiobacter).